Consider the following 182-residue polypeptide: Spermatophorin SP23 (182 aa).

The first 7 residues, 1–7 (MVASIAG), serve as a signal peptide directing secretion. Disordered regions lie at residues 1 to 26 (MVAS…FQPY), 56 to 79 (FQTI…NSIE), and 104 to 136 (IVVN…PPTI). The span at 109-128 (APPPPPVIYQAPPPPPPPPI) shows a compositional bias: pro residues.

In terms of tissue distribution, spermatophore.

The protein localises to the secreted. Its function is as follows. Structural protein of a layer within the wall of the spermatophore produced probably by cell type 4 of the bean-shaped gland (BAG). Fixation in the spermatophore seems to require covalent cross-linking of spermatophorins. This is Spermatophorin SP23 (SP23) from Tenebrio molitor (Yellow mealworm beetle).